The sequence spans 119 residues: Large ribosomal subunit protein uL22 (119 aa).

Belongs to the universal ribosomal protein uL22 family. In terms of assembly, part of the 50S ribosomal subunit.

This protein binds specifically to 23S rRNA; its binding is stimulated by other ribosomal proteins, e.g. L4, L17, and L20. It is important during the early stages of 50S assembly. It makes multiple contacts with different domains of the 23S rRNA in the assembled 50S subunit and ribosome. In terms of biological role, the globular domain of the protein is located near the polypeptide exit tunnel on the outside of the subunit, while an extended beta-hairpin is found that lines the wall of the exit tunnel in the center of the 70S ribosome. The protein is Large ribosomal subunit protein uL22 of Pelodictyon phaeoclathratiforme (strain DSM 5477 / BU-1).